We begin with the raw amino-acid sequence, 464 residues long: L-cysteine:1D-myo-inositol 2-amino-2-deoxy-alpha-D-glucopyranoside ligase (464 aa).

Residue Cys67 coordinates Zn(2+). L-cysteinyl-5'-AMP contacts are provided by residues 67-70, Thr82, and 105-107; these read CGIT and NVT. The short motif at 69-79 is the 'HIGH' region element; it reads ITPYDATHLGH. A 'ERGGDP' region motif is present at residues 207–212; the sequence is ERGGDP. Position 247 (Trp247) interacts with L-cysteinyl-5'-AMP. Residue Cys251 coordinates Zn(2+). 269-271 provides a ligand contact to L-cysteinyl-5'-AMP; it reads GTD. His276 serves as a coordination point for Zn(2+). Position 303 (Val303) interacts with L-cysteinyl-5'-AMP. Residues 309-313 carry the 'KMSKS' region motif; sequence KMSKS. Residues 410–435 are disordered; sequence AGGSAGAGPDPTHQGGPVRGSGGDVP.

It belongs to the class-I aminoacyl-tRNA synthetase family. MshC subfamily. As to quaternary structure, monomer. The cofactor is Zn(2+).

It catalyses the reaction 1D-myo-inositol 2-amino-2-deoxy-alpha-D-glucopyranoside + L-cysteine + ATP = 1D-myo-inositol 2-(L-cysteinylamino)-2-deoxy-alpha-D-glucopyranoside + AMP + diphosphate + H(+). Its function is as follows. Catalyzes the ATP-dependent condensation of GlcN-Ins and L-cysteine to form L-Cys-GlcN-Ins. The sequence is that of L-cysteine:1D-myo-inositol 2-amino-2-deoxy-alpha-D-glucopyranoside ligase from Frankia casuarinae (strain DSM 45818 / CECT 9043 / HFP020203 / CcI3).